A 398-amino-acid chain; its full sequence is Phosphoglycerate kinase (398 aa).

Substrate-binding positions include 24 to 26, Arg39, 62 to 65, Arg121, and Arg154; these read DFN and HFGR. ATP contacts are provided by residues Lys205, Gly296, Glu327, and 354–357; that span reads GGDS.

This sequence belongs to the phosphoglycerate kinase family. In terms of assembly, monomer.

The protein resides in the cytoplasm. It catalyses the reaction (2R)-3-phosphoglycerate + ATP = (2R)-3-phospho-glyceroyl phosphate + ADP. It functions in the pathway carbohydrate degradation; glycolysis; pyruvate from D-glyceraldehyde 3-phosphate: step 2/5. This is Phosphoglycerate kinase from Trichodesmium erythraeum (strain IMS101).